A 672-amino-acid polypeptide reads, in one-letter code: tRNA 5-methylaminomethyl-2-thiouridine biosynthesis bifunctional protein MnmC (672 aa).

Residues 1-243 (MTSITHAELG…KREMIAGCME (243 aa)) form a tRNA (mnm(5)s(2)U34)-methyltransferase region. The interval 269-672 (IGGGIASAAL…LRKGKAITEL (404 aa)) is FAD-dependent cmnm(5)s(2)U34 oxidoreductase.

The protein in the N-terminal section; belongs to the methyltransferase superfamily. tRNA (mnm(5)s(2)U34)-methyltransferase family. This sequence in the C-terminal section; belongs to the DAO family. FAD serves as cofactor.

The protein localises to the cytoplasm. The enzyme catalyses 5-aminomethyl-2-thiouridine(34) in tRNA + S-adenosyl-L-methionine = 5-methylaminomethyl-2-thiouridine(34) in tRNA + S-adenosyl-L-homocysteine + H(+). Functionally, catalyzes the last two steps in the biosynthesis of 5-methylaminomethyl-2-thiouridine (mnm(5)s(2)U) at the wobble position (U34) in tRNA. Catalyzes the FAD-dependent demodification of cmnm(5)s(2)U34 to nm(5)s(2)U34, followed by the transfer of a methyl group from S-adenosyl-L-methionine to nm(5)s(2)U34, to form mnm(5)s(2)U34. The polypeptide is tRNA 5-methylaminomethyl-2-thiouridine biosynthesis bifunctional protein MnmC (Vibrio vulnificus (strain YJ016)).